Reading from the N-terminus, the 480-residue chain is UDP-N-acetylmuramate--L-alanine ligase (480 aa).

122–128 (GTHGKTT) is an ATP binding site.

The protein belongs to the MurCDEF family.

It is found in the cytoplasm. The enzyme catalyses UDP-N-acetyl-alpha-D-muramate + L-alanine + ATP = UDP-N-acetyl-alpha-D-muramoyl-L-alanine + ADP + phosphate + H(+). It participates in cell wall biogenesis; peptidoglycan biosynthesis. In terms of biological role, cell wall formation. The sequence is that of UDP-N-acetylmuramate--L-alanine ligase from Pseudomonas paraeruginosa (strain DSM 24068 / PA7) (Pseudomonas aeruginosa (strain PA7)).